A 200-amino-acid polypeptide reads, in one-letter code: MEARELKANVRKESGKEQARRMRREGLIPAVLYGPGTDPVSLSVNASDLKTALKGAEENVLIKLIIDDSGRLMEKNSLIRELQIEPLTNNFFHADFYALRMDQESTFDVPIHFEGQPVGIEKGGELQYLKREIKVSCLPSELPDCITVDISRLDVGDAVLIGDLSLSESIRCFDSKDIVLVTIAALHGVNKAEETEEASS.

A disordered region spans residues 1-20; the sequence is MEARELKANVRKESGKEQAR.

This sequence belongs to the bacterial ribosomal protein bL25 family. CTC subfamily. Part of the 50S ribosomal subunit; part of the 5S rRNA/L5/L18/L25 subcomplex. Contacts the 5S rRNA. Binds to the 5S rRNA independently of L5 and L18.

Its function is as follows. This is one of the proteins that binds to the 5S RNA in the ribosome where it forms part of the central protuberance. In Syntrophus aciditrophicus (strain SB), this protein is Large ribosomal subunit protein bL25.